Consider the following 290-residue polypeptide: Probable endonuclease 4 (290 aa).

His66, His106, Glu143, Asp179, His182, His216, Asp229, His231, and Glu261 together coordinate Zn(2+).

It belongs to the AP endonuclease 2 family. The cofactor is Zn(2+).

The enzyme catalyses Endonucleolytic cleavage to 5'-phosphooligonucleotide end-products.. In terms of biological role, endonuclease IV plays a role in DNA repair. It cleaves phosphodiester bonds at apurinic or apyrimidinic (AP) sites, generating a 3'-hydroxyl group and a 5'-terminal sugar phosphate. The protein is Probable endonuclease 4 of Solibacter usitatus (strain Ellin6076).